Here is a 709-residue protein sequence, read N- to C-terminus: Elongation factor G (709 aa).

A tr-type G domain is found at 9–296 (AKVRNIGIMA…AVVRYLPSPL (288 aa)). Residues 18-25 (AHIDAGKT), 86-90 (DTPGH), and 140-143 (NKLD) each bind GTP.

This sequence belongs to the TRAFAC class translation factor GTPase superfamily. Classic translation factor GTPase family. EF-G/EF-2 subfamily.

It is found in the cytoplasm. In terms of biological role, catalyzes the GTP-dependent ribosomal translocation step during translation elongation. During this step, the ribosome changes from the pre-translocational (PRE) to the post-translocational (POST) state as the newly formed A-site-bound peptidyl-tRNA and P-site-bound deacylated tRNA move to the P and E sites, respectively. Catalyzes the coordinated movement of the two tRNA molecules, the mRNA and conformational changes in the ribosome. This chain is Elongation factor G, found in Streptomyces griseus subsp. griseus (strain JCM 4626 / CBS 651.72 / NBRC 13350 / KCC S-0626 / ISP 5235).